A 299-amino-acid chain; its full sequence is Very long chain fatty acid elongase 5 (299 aa).

An N-acetylmethionine modification is found at methionine 1. The next 7 helical transmembrane spans lie at 26-46, 64-84, 112-132, 139-158, 168-187, 205-225, and 227-247; these read WFLL…LLIV, ILQL…YELV, VLWW…FFIL, ITVL…WFVM, FGAT…YGLS, GQLV…FWPC, and FPLG…ALFT. The segment at 274–299 is disordered; sequence VAAVNGHTNSFPSLENSVKPRKQRKD. Over residues 279–289 the composition is skewed to polar residues; that stretch reads GHTNSFPSLEN.

This sequence belongs to the ELO family. ELOVL5 subfamily. As to quaternary structure, interacts with TECR.

It is found in the endoplasmic reticulum membrane. Its subcellular location is the cell projection. The protein localises to the dendrite. It carries out the reaction a very-long-chain acyl-CoA + malonyl-CoA + H(+) = a very-long-chain 3-oxoacyl-CoA + CO2 + CoA. The catalysed reaction is (6Z,9Z,12Z)-octadecatrienoyl-CoA + malonyl-CoA + H(+) = (8Z,11Z,14Z)-3-oxoeicosatrienoyl-CoA + CO2 + CoA. It catalyses the reaction (9Z,12Z,15Z)-octadecatrienoyl-CoA + malonyl-CoA + H(+) = (11Z,14Z,17Z)-3-oxoeicosatrienoyl-CoA + CO2 + CoA. The enzyme catalyses (9Z)-hexadecenoyl-CoA + malonyl-CoA + H(+) = 3-oxo-(11Z)-octadecenoyl-CoA + CO2 + CoA. It carries out the reaction (9Z)-octadecenoyl-CoA + malonyl-CoA + H(+) = 3-oxo-(11Z)-eicosenoyl-CoA + CO2 + CoA. The catalysed reaction is (11Z)-octadecenoyl-CoA + malonyl-CoA + H(+) = 3-oxo-(13Z)-eicosenoyl-CoA + CO2 + CoA. It catalyses the reaction (9Z,12Z)-octadecadienoyl-CoA + malonyl-CoA + H(+) = (11Z,14Z)-3-oxoicosa-11,14-dienoyl-CoA + CO2 + CoA. The enzyme catalyses (6Z,9Z,12Z,15Z)-octadecatetraenoyl-CoA + malonyl-CoA + H(+) = (8Z,11Z,14Z,17Z)-3-oxoicosatetraenoyl-CoA + CO2 + CoA. It carries out the reaction (5Z,8Z,11Z,14Z)-eicosatetraenoyl-CoA + malonyl-CoA + H(+) = (7Z,10Z,13Z,16Z)-3-oxodocosatetraenoyl-CoA + CO2 + CoA. The catalysed reaction is (5Z,8Z,11Z,14Z,17Z)-eicosapentaenoyl-CoA + malonyl-CoA + H(+) = 3-oxo-(7Z,10Z,13Z,16Z,19Z)-docosapentaenoyl-CoA + CO2 + CoA. It functions in the pathway lipid metabolism; polyunsaturated fatty acid biosynthesis. Its function is as follows. Catalyzes the first and rate-limiting reaction of the four reactions that constitute the long-chain fatty acids elongation cycle. This endoplasmic reticulum-bound enzymatic process allows the addition of 2 carbons to the chain of long- and very long-chain fatty acids (VLCFAs) per cycle. Condensing enzyme that acts specifically toward polyunsaturated acyl-CoA with the higher activity toward C18:3(n-6) acyl-CoA. May participate in the production of monounsaturated and of polyunsaturated VLCFAs of different chain lengths that are involved in multiple biological processes as precursors of membrane lipids and lipid mediators. In conditions where the essential linoleic and alpha linoleic fatty acids are lacking it is also involved in the synthesis of Mead acid from oleic acid. In Mus musculus (Mouse), this protein is Very long chain fatty acid elongase 5.